The sequence spans 464 residues: Probable 3-ketoacyl-CoA synthase 21 (464 aa).

Residues 21 to 41 (LLSSGVSVFEIFAGLLVVHLI) traverse the membrane as a helical segment. Positions 42 to 333 (YQRIRTRVKV…VIQHILCKKL (292 aa)) constitute an FAE domain. Residues C187, H352, H356, H385, and N389 contribute to the active site.

This sequence belongs to the thiolase-like superfamily. Chalcone/stilbene synthases family. Expressed in flowers.

The protein localises to the membrane. The catalysed reaction is a very-long-chain acyl-CoA + malonyl-CoA + H(+) = a very-long-chain 3-oxoacyl-CoA + CO2 + CoA. It functions in the pathway lipid metabolism; fatty acid biosynthesis. This is Probable 3-ketoacyl-CoA synthase 21 from Arabidopsis thaliana (Mouse-ear cress).